The following is a 313-amino-acid chain: Malate dehydrogenase (313 aa).

Residues 8–13 and aspartate 33 each bind NAD(+); that span reads GAGNVG. Residues arginine 83 and arginine 89 each coordinate substrate. NAD(+) contacts are provided by residues asparagine 96 and 119-121; that span reads ISN. Substrate contacts are provided by asparagine 121 and arginine 152. Histidine 176 acts as the Proton acceptor in catalysis.

The protein belongs to the LDH/MDH superfamily. MDH type 3 family.

The catalysed reaction is (S)-malate + NAD(+) = oxaloacetate + NADH + H(+). Catalyzes the reversible oxidation of malate to oxaloacetate. This is Malate dehydrogenase from Bacteroides thetaiotaomicron (strain ATCC 29148 / DSM 2079 / JCM 5827 / CCUG 10774 / NCTC 10582 / VPI-5482 / E50).